Reading from the N-terminus, the 199-residue chain is Putative lectin L633 (199 aa).

The signal sequence occupies residues 1–25 (MNILLLLMLLTSIILLVILIFLAYN). Over residues 35-48 (CITPAPESQSISPD) the composition is skewed to polar residues. Positions 35–74 (CITPAPESQSISPDQTTQLQTTTPVTSTPSNPTPTTIIPN) are disordered. The segment covering 49–73 (QTTQLQTTTPVTSTPSNPTPTTIIP) has biased composition (low complexity). The Bulb-type lectin domain maps to 84 to 195 (EIVSNGDNVL…LGQELWCATR (112 aa)). Residue asparagine 121 is glycosylated (N-linked (GlcNAc...) asparagine; by host).

Its subcellular location is the secreted. The polypeptide is Putative lectin L633 (Acanthamoeba polyphaga (Amoeba)).